Here is a 100-residue protein sequence, read N- to C-terminus: MTERFQGRLADVIRRPLITEKATRALEFNQYTFEVDHRAAKPDIKAAIEQLFDVKVTGISTMNPPRRTRRMGRFAGKRAQVKKAVVRLAEGNSIQLFPES.

The protein belongs to the universal ribosomal protein uL23 family. As to quaternary structure, part of the 50S ribosomal subunit. Contacts protein L29, and trigger factor when it is bound to the ribosome.

Its function is as follows. One of the early assembly proteins it binds 23S rRNA. One of the proteins that surrounds the polypeptide exit tunnel on the outside of the ribosome. Forms the main docking site for trigger factor binding to the ribosome. The polypeptide is Large ribosomal subunit protein uL23 (Parasynechococcus marenigrum (strain WH8102)).